Consider the following 462-residue polypeptide: A-type ATP synthase subunit B (462 aa).

It belongs to the ATPase alpha/beta chains family. In terms of assembly, has multiple subunits with at least A(3), B(3), C, D, E, F, H, I and proteolipid K(x).

It localises to the cell membrane. Functionally, component of the A-type ATP synthase that produces ATP from ADP in the presence of a proton gradient across the membrane. The B chain is a regulatory subunit. This Methanococcus maripaludis (strain C5 / ATCC BAA-1333) protein is A-type ATP synthase subunit B.